Reading from the N-terminus, the 730-residue chain is Acetylene hydratase (730 aa).

Positions 9 and 12 each coordinate [4Fe-4S] cluster. Residue Asp13 is part of the active site. [4Fe-4S] cluster is bound by residues Cys16 and Cys46. W-bis(molybdopterin guanine dinucleotide) is bound by residues Lys48, 111–114, Cys141, 172–173, 177–179, 199–202, 218–221, Ser296, Gln300, 416–418, 422–423, 442–444, Asp460, Arg465, 602–613, Arg606, His676, Asp699, and Arg720; these read TEIN, KN, HNW, LDPR, YGTD, ASN, GY, YDQ, and FAGLREDSNFQS.

The protein belongs to the prokaryotic molybdopterin-containing oxidoreductase family. As to quaternary structure, monomer. Requires [4Fe-4S] cluster as cofactor. W-bis(molybdopterin guanine dinucleotide) serves as cofactor.

It catalyses the reaction acetaldehyde = acetylene + H2O. In terms of biological role, catalyzes the hydration of acetylene to form acetaldehyde. Ethylene cannot act as a substrate. The polypeptide is Acetylene hydratase (Syntrophotalea acetylenica (Pelobacter acetylenicus)).